Here is a 120-residue protein sequence, read N- to C-terminus: U13-lycotoxin-Ls1e (120 aa).

A signal peptide spans 1-16 (MKILFVLISILYAVYC). A propeptide spanning residues 17-54 (FSSEEDVDSAYLANELEPVEDINSEQYAALEPKEEQER) is cleaved from the precursor. 4 cysteine pairs are disulfide-bonded: Cys56–Cys70, Cys63–Cys76, Cys69–Cys87, and Cys78–Cys85. In terms of domain architecture, Agouti spans 56-95 (CAGMGRDCKDDCDCCLNIATCNCWFGRYFCSCTFGDYQTC).

It belongs to the neurotoxin 05 (agouti) family. Contains 6 disulfide bonds. As to expression, expressed by the venom gland.

The protein localises to the secreted. The protein is U13-lycotoxin-Ls1e of Lycosa singoriensis (Wolf spider).